Consider the following 593-residue polypeptide: Cytochrome c oxidase polypeptide 1 (593 aa).

2 helical membrane passes run A5 to L25 and I71 to L91. Fe(II)-heme a is bound at residue H117. 6 helical membrane passes run L122–I142, A154–P174, G204–F224, Q246–L266, L288–V308, and L320–V340. Residues H294 and Y298 each contribute to the Cu cation site. Positions H294–Y298 form a cross-link, 1'-histidyl-3'-tyrosine (His-Tyr). Positions 343 and 344 each coordinate Cu cation. The next 5 helical transmembrane spans lie at F358–T378, F401–H421, Y425–A445, F467–G487, and L506–A526. Residue H429 coordinates heme a3. A Fe(II)-heme a-binding site is contributed by H431. Residues T562–S593 form a disordered region.

The protein belongs to the heme-copper respiratory oxidase family.

Its subcellular location is the cell membrane. The enzyme catalyses 4 Fe(II)-[cytochrome c] + O2 + 8 H(+)(in) = 4 Fe(III)-[cytochrome c] + 2 H2O + 4 H(+)(out). It participates in energy metabolism; oxidative phosphorylation. Its function is as follows. Cytochrome c oxidase is the component of the respiratory chain that catalyzes the reduction of oxygen to water. Subunits 1-3 form the functional core of the enzyme complex. CO I is the catalytic subunit of the enzyme. Electrons originating in cytochrome c are transferred via the copper A center of subunit 2 and heme A of subunit 1 to the bimetallic center formed by heme A3 and copper B. This is Cytochrome c oxidase polypeptide 1 (coxA2) from Halobacterium salinarum (strain ATCC 700922 / JCM 11081 / NRC-1) (Halobacterium halobium).